The following is an 87-amino-acid chain: Large ribosomal subunit protein eL31 (87 aa).

This sequence belongs to the eukaryotic ribosomal protein eL31 family.

This Methanocaldococcus jannaschii (strain ATCC 43067 / DSM 2661 / JAL-1 / JCM 10045 / NBRC 100440) (Methanococcus jannaschii) protein is Large ribosomal subunit protein eL31 (rpl31e).